Consider the following 418-residue polypeptide: MVADTDVKEIVVDALPEVSEPAAVDDSEVTEDATVQDKKKKKKKKKKKGNNMKNIALIYPDEKYPEGQWMEYHQDFNLKRVTDEERRYLERSEEYEQRCNDMRKGAEIHRRVRESVRNKIKPGMTLTEIANLVEDGTRKFTGTDANGDHVDRPKSQGIAFPTGLSLNHCAAHFTPNAGDKTVLKFEDVMKVDFGVHVNGYIIDSAFTIAFDPQYDNLLAAVKDATNTGIKEAGIDVRLTDIGEAIQEVMESYEVEINGETHQVKPCRNLCGHNINPYSIHGGKSVPIVKNGDNTKMEENEHFAIETFGSTGRGYVIQEGECSHYAKKPGSHPTPSLSSAKNLLKVIDENFGTIPFCRRYLDRLGEDKHVYALNTLVRQGIVEDYPPLNDIKGSYTAQFEHTLILHPHKKEIVSRGDDY.

Residues Val-18–Gly-49 form a disordered region. Over residues Lys-38 to Gly-49 the composition is skewed to basic residues. His-172 lines the substrate pocket. Residues Asp-192, Asp-203, and His-272 each coordinate a divalent metal cation. His-280 contributes to the substrate binding site. Glu-305 and Glu-399 together coordinate a divalent metal cation.

It belongs to the peptidase M24A family. Methionine aminopeptidase eukaryotic type 2 subfamily. Requires Co(2+) as cofactor. Zn(2+) is required as a cofactor. Mn(2+) serves as cofactor. The cofactor is Fe(2+).

It is found in the cytoplasm. It carries out the reaction Release of N-terminal amino acids, preferentially methionine, from peptides and arylamides.. Its function is as follows. Cotranslationally removes the N-terminal methionine from nascent proteins. The N-terminal methionine is often cleaved when the second residue in the primary sequence is small and uncharged (Met-Ala-, Cys, Gly, Pro, Ser, Thr, or Val). In Kluyveromyces lactis (strain ATCC 8585 / CBS 2359 / DSM 70799 / NBRC 1267 / NRRL Y-1140 / WM37) (Yeast), this protein is Methionine aminopeptidase 2.